Here is a 362-residue protein sequence, read N- to C-terminus: Putative F-box protein At3g23260 (362 aa).

The F-box domain maps to 1 to 46 (MEWRSLPVELQEEILSRVPAKYLARLRSTSKQWNALSKTGSFAKKH).

The polypeptide is Putative F-box protein At3g23260 (Arabidopsis thaliana (Mouse-ear cress)).